A 251-amino-acid polypeptide reads, in one-letter code: Imidazole glycerol phosphate synthase subunit HisF (251 aa).

Active-site residues include D11 and D130.

It belongs to the HisA/HisF family. As to quaternary structure, heterodimer of HisH and HisF.

It localises to the cytoplasm. It carries out the reaction 5-[(5-phospho-1-deoxy-D-ribulos-1-ylimino)methylamino]-1-(5-phospho-beta-D-ribosyl)imidazole-4-carboxamide + L-glutamine = D-erythro-1-(imidazol-4-yl)glycerol 3-phosphate + 5-amino-1-(5-phospho-beta-D-ribosyl)imidazole-4-carboxamide + L-glutamate + H(+). It functions in the pathway amino-acid biosynthesis; L-histidine biosynthesis; L-histidine from 5-phospho-alpha-D-ribose 1-diphosphate: step 5/9. Its function is as follows. IGPS catalyzes the conversion of PRFAR and glutamine to IGP, AICAR and glutamate. The HisF subunit catalyzes the cyclization activity that produces IGP and AICAR from PRFAR using the ammonia provided by the HisH subunit. The sequence is that of Imidazole glycerol phosphate synthase subunit HisF from Pelagibacter ubique (strain HTCC1062).